The following is a 515-amino-acid chain: Anterior pharynx in excess protein 1 (515 aa).

The N-terminal stretch at 1–26 (MTNFSSLLTTIFLCIISSATGSGTIE) is a signal peptide. At 27 to 392 (LLISSPQTVL…QASDELQLRL (366 aa)) the chain is on the extracellular side. A glycan (N-linked (GlcNAc...) asparagine) is linked at Asn-123. A DSL domain is found at 130–172 (NLCSSNYHGKRCNRYCIANAKLHWECSTHGVRRCSAGWSGEDC). 14 disulfides stabilise this stretch: Cys-132/Cys-141, Cys-145/Cys-155, Cys-163/Cys-172, Cys-177/Cys-187, Cys-181/Cys-193, Cys-195/Cys-204, Cys-213/Cys-218, Cys-228/Cys-237, Cys-244/Cys-256, Cys-250/Cys-268, Cys-270/Cys-279, Cys-288/Cys-300, Cys-294/Cys-310, and Cys-312/Cys-321. 4 EGF-like domains span residues 173–205 (SNPI…TRCE), 203–238 (RCEQ…DRCD), 240–280 (DIKI…SQCK), and 284–322 (SKVR…KFCE). The N-linked (GlcNAc...) asparagine glycan is linked to Asn-200. Residues 325–349 (NHGDCSAMRCSAGETCQISGDFAIC) form the EGF-like 5; incomplete domain. A helical membrane pass occupies residues 393–413 (IAAICVLFSVCVIGLALVSFF). Residues 414–515 (FYMHSFSKWK…AADDESSFRV (102 aa)) lie on the Cytoplasmic side of the membrane. Disordered regions lie at residues 427-452 (SQQA…SGTG) and 466-494 (RGNA…PPAY). The segment covering 431 to 452 (GGSTILPTTTSIPMSTTSSGTG) has biased composition (low complexity).

The protein resides in the cell membrane. It is found in the nucleus. It localises to the cytoplasm. In terms of biological role, probable ligand for lin-12/Notch and glp-1/Notch receptors and involved in the mediation of Notch signaling. Involved in the lin-12/Notch pathway signaling of cell fate in vulval precursor cells (VPCs), acting redundantly with dsl-1 and lag-2. Contributes to the establishment of the dorsal-ventral axis in early embryos. Involved in the specification of the blastomere cell ABp fate, probably acting as a signal from the P2 blastomere to the glp-1/Notch receptor on ABp and ABa. Probably acts as a signal, from the secondary vulval epithelial cells and the vulval muscle type 1 (vm1) cells, to activate the lin-12/Notch pathway in type 2 vulval muscle (vm2) cells, contributing to formation of the postsynaptic muscle plasma membrane extensions, known as muscle arms. Required for oocyte growth control, acting redundantly with lag-2, perhaps signaling via the glp-1/Notch pathway. Plays a somatic role in ovulation during adulthood, perhaps via lin-12/Notch signaling. Involved in establishing left-right asymmetry during intestinal organogenesis. In Caenorhabditis elegans, this protein is Anterior pharynx in excess protein 1 (apx-1).